The primary structure comprises 225 residues: Immune-associated nucleotide-binding protein 1 (225 aa).

One can recognise an AIG1-type G domain in the interval 6–214 (CPVTNLLLLG…YTENMHRKIK (209 aa)). Residues 15–22 (GRSENGKS) form a G1 region. A GTP-binding site is contributed by 15-23 (GRSENGKSS). A G2 region spans residues 42–46 (DMDQR). The tract at residues 64–67 (DTPG) is G3. The G4 stretch occupies residues 134–137 (TGGD). Residues 173–175 (NNK) form a G5 region. Position 174 (asparagine 174) interacts with GTP.

The protein belongs to the TRAFAC class TrmE-Era-EngA-EngB-Septin-like GTPase superfamily. AIG1/Toc34/Toc159-like paraseptin GTPase family. IAN subfamily. In terms of tissue distribution, mostly expressed in pollen.

The polypeptide is Immune-associated nucleotide-binding protein 1 (Arabidopsis thaliana (Mouse-ear cress)).